The following is a 103-amino-acid chain: Small ribosomal subunit protein uS10 (103 aa).

It belongs to the universal ribosomal protein uS10 family. In terms of assembly, part of the 30S ribosomal subunit.

In terms of biological role, involved in the binding of tRNA to the ribosomes. The polypeptide is Small ribosomal subunit protein uS10 (Escherichia coli O127:H6 (strain E2348/69 / EPEC)).